Here is a 478-residue protein sequence, read N- to C-terminus: Ketoisovalerate oxidoreductase subunit VorA (478 aa).

In terms of assembly, heterotrimer of the VorA, VorB and VorC subunits.

The sequence is that of Ketoisovalerate oxidoreductase subunit VorA (vorA) from Methanothermobacter marburgensis (strain ATCC BAA-927 / DSM 2133 / JCM 14651 / NBRC 100331 / OCM 82 / Marburg) (Methanobacterium thermoautotrophicum).